The sequence spans 250 residues: UPF0259 membrane protein Spro_2675 (250 aa).

Helical transmembrane passes span 23 to 43 (ILMLALLTAFISVLLNQAFSP), 87 to 107 (AATFSALVGNVLLVGGMLTLI), 132 to 152 (LLLLLFICTLLIQLGLTLFVV), 156 to 176 (IMAIAFSLAPVITATDKKGVF), 192 to 212 (VIVPAMMLWLAAKLLVLFMVS), and 222 to 242 (ASVVLTALSNLVSALLLIYLF).

It belongs to the UPF0259 family.

It is found in the cell inner membrane. The protein is UPF0259 membrane protein Spro_2675 of Serratia proteamaculans (strain 568).